The primary structure comprises 338 residues: Formimidoylglutamase (338 aa).

Mn(2+) contacts are provided by His137, Asp166, His168, Asp170, Cys259, and Asp261.

It belongs to the arginase family. Requires Mn(2+) as cofactor.

It carries out the reaction N-formimidoyl-L-glutamate + H2O = formamide + L-glutamate. It participates in amino-acid degradation; L-histidine degradation into L-glutamate; L-glutamate from N-formimidoyl-L-glutamate (hydrolase route): step 1/1. Functionally, catalyzes the conversion of N-formimidoyl-L-glutamate to L-glutamate and formamide. The polypeptide is Formimidoylglutamase (Clostridium tetani (strain Massachusetts / E88)).